We begin with the raw amino-acid sequence, 127 residues long: uncharacterized protein (127 aa).

It localises to the mitochondrion. This is an uncharacterized protein from Arabidopsis thaliana (Mouse-ear cress).